The following is a 156-amino-acid chain: Endogenous retrovirus group K member 8 Pro protein (156 aa).

Residues 21–96 enclose the Peptidase A2 domain; that stretch reads FEGLVDTGAD…IPLNLWGRDL (76 aa). Aspartate 26 is a catalytic residue. The G-patch domain maps to 111 to 156; sequence YSPTSQKIMTKRGYIPGKGLGKNEDGIKIPFEAKINQKREGIGYPF.

It belongs to the peptidase A2 family. HERV class-II K(HML-2) subfamily. Active as a homodimer. In terms of processing, autoproteolytically processed at the N-terminus. Expected C-terminal autoprocessing not detected. The sequence shown is that of the processed Pro protein.

The enzyme catalyses Processing at the authentic HIV-1 PR recognition site and release of the mature p17 matrix and the p24 capsid protein, as a result of the cleavage of the -SQNY-|-PIVQ- cleavage site.. Its function is as follows. Retroviral proteases have roles in the processing of the primary translation products and the maturation of the viral particle. Endogenous Pro proteins may have kept, lost or modified their original function during evolution. The chain is Endogenous retrovirus group K member 8 Pro protein (ERVK-8) from Homo sapiens (Human).